A 308-amino-acid polypeptide reads, in one-letter code: MSITGMDSSHVTESQGALLFNEPLAEYTTWRVGGPAARLYKPANIDDLALFLSRLPFDEPLLWLGLGSNSLIRDGGFSGTVILTQGCLKEMTLLSDNCIRVEAGVSCASMARFSARNNLSGGEFWAGIPGTMGGALRMNAGCHGGETWQSVIEVQTINRRGEIRTRKPEEFEVAYRHVAGLGDEWFISAKLQLSPGNKETSLQLIKDLLAHRAKTQPTNEYNCGSVFRNPPGDFAARLIESCGLKGVSIGGAVVSEKHANFIINHQGTATAANIEALIHLVQTKVREQTSIELIREVHIIGDANVQTR.

In terms of domain architecture, FAD-binding PCMH-type spans 32–196; sequence VGGPAARLYK…ISAKLQLSPG (165 aa). R176 is an active-site residue. S225 functions as the Proton donor in the catalytic mechanism. E296 is an active-site residue.

This sequence belongs to the MurB family. FAD serves as cofactor.

The protein resides in the cytoplasm. The enzyme catalyses UDP-N-acetyl-alpha-D-muramate + NADP(+) = UDP-N-acetyl-3-O-(1-carboxyvinyl)-alpha-D-glucosamine + NADPH + H(+). It participates in cell wall biogenesis; peptidoglycan biosynthesis. Cell wall formation. This chain is UDP-N-acetylenolpyruvoylglucosamine reductase, found in Legionella pneumophila (strain Corby).